The chain runs to 285 residues: Nucleotide-binding protein Pnap_0906 (285 aa).

An ATP-binding site is contributed by 8–15 (GMSGSGKS). 57–60 (DVRS) is a binding site for GTP.

This sequence belongs to the RapZ-like family.

Its function is as follows. Displays ATPase and GTPase activities. The polypeptide is Nucleotide-binding protein Pnap_0906 (Polaromonas naphthalenivorans (strain CJ2)).